Consider the following 279-residue polypeptide: Sperm acrosome membrane-associated protein 1 (279 aa).

The signal sequence occupies residues 1–29; sequence MKSRGAGCSARLLLTVGWLLLAGLQSTCG. Topologically, residues 30-221 are extracellular; sequence INVTAIQDPS…VIICIFVIFV (192 aa). An N-linked (GlcNAc...) asparagine glycan is attached at Asn-31. The segment at 39–74 is disordered; that stretch reads SLAREGEGEPEGDEEPENDSETEKEPQAEAEDDSEG. Over residues 46 to 58 the composition is skewed to acidic residues; that stretch reads GEPEGDEEPENDS. The helical transmembrane segment at 222-242 threads the bilayer; sequence LIFIIINWTAVKDFWAKASTT. The Cytoplasmic portion of the chain corresponds to 243-279; that stretch reads EIQSELSSMRYKDSTSLDQSPTDIPGHEDDALSEWNE. Residue Tyr-253 is modified to Phosphotyrosine. The disordered stretch occupies residues 253 to 279; it reads YKDSTSLDQSPTDIPGHEDDALSEWNE. Phosphoserine occurs at positions 262 and 275.

Interacts with CYLC1; the interaction may be relevant for proper acrosome attachment to the nuclear envelope. Post-translationally, N-glycosylated.

The protein resides in the cytoplasmic vesicle. The protein localises to the secretory vesicle. It is found in the acrosome inner membrane. Its function is as follows. Plays a role in acrosome expansion and establishment of normal sperm morphology during spermatogenesis. Important for male fertility. This chain is Sperm acrosome membrane-associated protein 1 (SPACA1), found in Bos taurus (Bovine).